We begin with the raw amino-acid sequence, 374 residues long: Putative glutamate--cysteine ligase 2 (374 aa).

Belongs to the glutamate--cysteine ligase type 2 family. YbdK subfamily.

It catalyses the reaction L-cysteine + L-glutamate + ATP = gamma-L-glutamyl-L-cysteine + ADP + phosphate + H(+). ATP-dependent carboxylate-amine ligase which exhibits weak glutamate--cysteine ligase activity. This is Putative glutamate--cysteine ligase 2 from Paracidovorax citrulli (strain AAC00-1) (Acidovorax citrulli).